Consider the following 545-residue polypeptide: CTP synthase (545 aa).

The amidoligase domain stretch occupies residues 1 to 266; it reads MTTKYIFVTG…DEICVKRFGL (266 aa). CTP is bound at residue S14. A UTP-binding site is contributed by S14. ATP-binding positions include 15 to 20 and D72; that span reads SLGKGI. 2 residues coordinate Mg(2+): D72 and E140. CTP contacts are provided by residues 147–149, 187–192, and K223; these read DIE and KTKPTQ. UTP is bound by residues 187–192 and K223; that span reads KTKPTQ. Position 239-241 (239-241) interacts with ATP; that stretch reads RDV. The 252-residue stretch at 291–542 folds into the Glutamine amidotransferase type-1 domain; that stretch reads IIGMVGKYTE…IKSAIDHQQG (252 aa). G352 contributes to the L-glutamine binding site. The Nucleophile; for glutamine hydrolysis role is filled by C379. L-glutamine is bound by residues 380 to 383, E403, and R470; that span reads LGMQ. Active-site residues include H515 and E517.

This sequence belongs to the CTP synthase family. As to quaternary structure, homotetramer.

It catalyses the reaction UTP + L-glutamine + ATP + H2O = CTP + L-glutamate + ADP + phosphate + 2 H(+). The catalysed reaction is L-glutamine + H2O = L-glutamate + NH4(+). The enzyme catalyses UTP + NH4(+) + ATP = CTP + ADP + phosphate + 2 H(+). It participates in pyrimidine metabolism; CTP biosynthesis via de novo pathway; CTP from UDP: step 2/2. With respect to regulation, allosterically activated by GTP, when glutamine is the substrate; GTP has no effect on the reaction when ammonia is the substrate. The allosteric effector GTP functions by stabilizing the protein conformation that binds the tetrahedral intermediate(s) formed during glutamine hydrolysis. Inhibited by the product CTP, via allosteric rather than competitive inhibition. Functionally, catalyzes the ATP-dependent amination of UTP to CTP with either L-glutamine or ammonia as the source of nitrogen. Regulates intracellular CTP levels through interactions with the four ribonucleotide triphosphates. The sequence is that of CTP synthase from Psychromonas ingrahamii (strain DSM 17664 / CCUG 51855 / 37).